The primary structure comprises 482 residues: Rhamnulokinase (482 aa).

An ATP-binding site is contributed by 13–17 (ASSGR). Substrate-binding positions include G83 and 232 to 234 (HDT). Catalysis depends on D233, which acts as the Proton acceptor. An ATP-binding site is contributed by T255. Substrate is bound at residue N292. N300 is an ATP binding site. A disulfide bridge links C349 with C366. Residue G398 coordinates ATP. An intrachain disulfide couples C409 to C413.

Belongs to the rhamnulokinase family. Requires Mg(2+) as cofactor.

It carries out the reaction L-rhamnulose + ATP = L-rhamnulose 1-phosphate + ADP + H(+). The protein operates within carbohydrate degradation; L-rhamnose degradation; glycerone phosphate from L-rhamnose: step 2/3. Involved in the catabolism of L-rhamnose (6-deoxy-L-mannose). Catalyzes the transfer of the gamma-phosphate group from ATP to the 1-hydroxyl group of L-rhamnulose to yield L-rhamnulose 1-phosphate. This chain is Rhamnulokinase, found in Mannheimia succiniciproducens (strain KCTC 0769BP / MBEL55E).